We begin with the raw amino-acid sequence, 218 residues long: MKPSFLHIPAAALLLCSLWILPIHCCNKALCASDVSKCLIQELCQCRPTDGNCSCCKECMLCLGTLWDECCDCVGMCNPRNYSDTPPTSKSTVEELHEPIPSLFRALTEGDTQLNWNIVTFPVVEELSHHENLVSFLETVNQPQQQNVSVQVSHSNEKEHMCTVVYFDDCMSIHQCKVSCESMGASKYRWFHNACCECVGPECIDYGSKTVKCVNCMV.

Residues 1-25 form the signal peptide; it reads MKPSFLHIPAAALLLCSLWILPIHC. Residues Asn-52, Asn-81, and Asn-147 are each glycosylated (N-linked (GlcNAc...) asparagine).

This sequence belongs to the twisted gastrulation protein family. As to quaternary structure, binds directly to bmp2, bmp4 and bmp7 and can form a ternary complex with bmps and chordin, thus preventing the binding of bmps to their cell surface receptors.

It is found in the secreted. Functionally, involved in dorsal-ventral patterning, permitting peak BMP signaling by antagonizing the residual anti-BMP activity of the cleavage products of chrd. Functions to promote the formation of ventral mesoderm by increasing the activity of bmp7 and other BMPS. Seems to antagonize BMP signaling by forming ternary complexes with chrd and BMPs, thereby preventing BMPs from binding to their receptors. In addition to the anti-BMP function, also has pro-BMP activity, partly mediated by cleavage and degradation of chrd, which releases BMPs from ternary complexes. May be an important modulator of BMP-regulated cartilage development and chondrocyte differentiation. This Xenopus laevis (African clawed frog) protein is Twisted gastrulation protein homolog 1-B (twsg1-b).